A 160-amino-acid polypeptide reads, in one-letter code: MRAVSKKKKTPENVIALNRKARFEFHIEETMEAGLALEGWEVKSLRAGRVNLQEAYVLIRRGEAWLIGCTITPLPTASTHIKPDPTRTRRLLLHKKEIARLTGAADREGYTVVPLDLHWKRGKAKLSIGLAKGKKKHDKRADQKEQDWQRQKQRLMKHKV.

Residues 130 to 160 (LAKGKKKHDKRADQKEQDWQRQKQRLMKHKV) form a disordered region. Residues 139-150 (KRADQKEQDWQR) are compositionally biased toward basic and acidic residues. Over residues 151 to 160 (QKQRLMKHKV) the composition is skewed to basic residues.

This sequence belongs to the SmpB family.

The protein resides in the cytoplasm. Functionally, required for rescue of stalled ribosomes mediated by trans-translation. Binds to transfer-messenger RNA (tmRNA), required for stable association of tmRNA with ribosomes. tmRNA and SmpB together mimic tRNA shape, replacing the anticodon stem-loop with SmpB. tmRNA is encoded by the ssrA gene; the 2 termini fold to resemble tRNA(Ala) and it encodes a 'tag peptide', a short internal open reading frame. During trans-translation Ala-aminoacylated tmRNA acts like a tRNA, entering the A-site of stalled ribosomes, displacing the stalled mRNA. The ribosome then switches to translate the ORF on the tmRNA; the nascent peptide is terminated with the 'tag peptide' encoded by the tmRNA and targeted for degradation. The ribosome is freed to recommence translation, which seems to be the essential function of trans-translation. In Alkalilimnicola ehrlichii (strain ATCC BAA-1101 / DSM 17681 / MLHE-1), this protein is SsrA-binding protein.